Here is a 441-residue protein sequence, read N- to C-terminus: MTNTPAPRARRSVLSRGSWSETARIAGILRKETVGGAVLLVASAVALVWANSPWAESYFALRDLKIGAEPFGLHLNLTLGTWAADGLLAVFFLVVGLELKREFVAGDLRDPARAALPMAAAVGGMVVPALIFVAVTAPVGDGATRGWAIPTATDIAFAVAVLAVISTHLPAALRTFLLTLAVVDDLLAVTVIAVFYTDEINLTALGLSIVPLALFALCVQRRIRSWWLLLPLGVATWVLMHESGVHATVAGVLLGFTVPVLRSVAAGGPEAGPGLAEHFEHRLRPLSAGVAVPVFAFFAAGVAIGGVSGLTRALSDPITLGIILGLVVGKPVGIFLTTRVLTAVTRANLDDALRWIDVFGVALLAGIGFTVSLLIGDLAYGLGSDRDDFVKVGVLTGSLVAALIAAVLLRVRNRHYRAVWLQETADTDRDGVPDVYQSQRD.

12 consecutive transmembrane segments (helical) span residues 34–54 (VGGA…NSPW), 77–97 (LTLG…VVGL), 115–135 (ALPM…FVAV), 146–166 (GWAI…AVIS), 176–196 (FLLT…AVFY), 199–219 (EINL…ALCV), 225–245 (SWWL…ESGV), 249–269 (VAGV…AGGP), 290–310 (VAVP…VSGL), 317–337 (PITL…IFLT), 355–375 (WIDV…SLLI), and 389–409 (FVKV…AVLL).

Belongs to the NhaA Na(+)/H(+) (TC 2.A.33) antiporter family.

The protein localises to the cell membrane. It catalyses the reaction Na(+)(in) + 2 H(+)(out) = Na(+)(out) + 2 H(+)(in). Its function is as follows. Na(+)/H(+) antiporter that extrudes sodium in exchange for external protons. The polypeptide is Na(+)/H(+) antiporter NhaA 2 (Mycobacterium sp. (strain MCS)).